The chain runs to 493 residues: Probable cytosol aminopeptidase (493 aa).

The Mn(2+) site is built by Lys-262 and Asp-267. Residue Lys-274 is part of the active site. The Mn(2+) site is built by Asp-285, Asp-344, and Glu-346. Residue Arg-348 is part of the active site.

Belongs to the peptidase M17 family. Requires Mn(2+) as cofactor.

It is found in the cytoplasm. The enzyme catalyses Release of an N-terminal amino acid, Xaa-|-Yaa-, in which Xaa is preferably Leu, but may be other amino acids including Pro although not Arg or Lys, and Yaa may be Pro. Amino acid amides and methyl esters are also readily hydrolyzed, but rates on arylamides are exceedingly low.. The catalysed reaction is Release of an N-terminal amino acid, preferentially leucine, but not glutamic or aspartic acids.. Functionally, presumably involved in the processing and regular turnover of intracellular proteins. Catalyzes the removal of unsubstituted N-terminal amino acids from various peptides. The protein is Probable cytosol aminopeptidase of Xanthomonas campestris pv. campestris (strain 8004).